The following is a 124-amino-acid chain: Large ribosomal subunit protein uL18 (124 aa).

It belongs to the universal ribosomal protein uL18 family. Part of the 50S ribosomal subunit; part of the 5S rRNA/L5/L18/L25 subcomplex. Contacts the 5S and 23S rRNAs.

In terms of biological role, this is one of the proteins that bind and probably mediate the attachment of the 5S RNA into the large ribosomal subunit, where it forms part of the central protuberance. The protein is Large ribosomal subunit protein uL18 of Aquifex aeolicus (strain VF5).